Here is a 276-residue protein sequence, read N- to C-terminus: Protein TabB (276 aa).

Belongs to the transferase hexapeptide repeat family. Pyridoxal 5'-phosphate is required as a cofactor.

In Pseudomonas amygdali pv. tabaci (Pseudomonas syringae pv. tabaci), this protein is Protein TabB (tabB).